A 597-amino-acid chain; its full sequence is Aspartate--tRNA(Asp/Asn) ligase (597 aa).

Residue glutamate 172 participates in L-aspartate binding. The segment at glutamine 196 to lysine 199 is aspartate. Arginine 218 provides a ligand contact to L-aspartate. ATP-binding positions include arginine 218–glutamate 220 and glutamine 227. Residue histidine 454 participates in L-aspartate binding. Position 488 (glutamate 488) interacts with ATP. Residue arginine 495 coordinates L-aspartate. Glycine 540 to arginine 543 serves as a coordination point for ATP.

This sequence belongs to the class-II aminoacyl-tRNA synthetase family. Type 1 subfamily. Homodimer.

It localises to the cytoplasm. The catalysed reaction is tRNA(Asx) + L-aspartate + ATP = L-aspartyl-tRNA(Asx) + AMP + diphosphate. Aspartyl-tRNA synthetase with relaxed tRNA specificity since it is able to aspartylate not only its cognate tRNA(Asp) but also tRNA(Asn). Reaction proceeds in two steps: L-aspartate is first activated by ATP to form Asp-AMP and then transferred to the acceptor end of tRNA(Asp/Asn). The chain is Aspartate--tRNA(Asp/Asn) ligase from Chromobacterium violaceum (strain ATCC 12472 / DSM 30191 / JCM 1249 / CCUG 213 / NBRC 12614 / NCIMB 9131 / NCTC 9757 / MK).